Here is a 149-residue protein sequence, read N- to C-terminus: Ribonuclease HI (149 aa).

The RNase H type-1 domain maps to 1 to 142; the sequence is MTPKVTIYTD…ADALANEGLR (142 aa). Mg(2+) contacts are provided by Asp-10, Glu-48, Asp-70, and Asp-134.

It belongs to the RNase H family. Monomer. Mg(2+) serves as cofactor.

It localises to the cytoplasm. It carries out the reaction Endonucleolytic cleavage to 5'-phosphomonoester.. In terms of biological role, endonuclease that specifically degrades the RNA of RNA-DNA hybrids. The sequence is that of Ribonuclease HI from Caulobacter vibrioides (strain ATCC 19089 / CIP 103742 / CB 15) (Caulobacter crescentus).